We begin with the raw amino-acid sequence, 204 residues long: Peptide deformylase (204 aa).

The Fe cation site is built by C131 and H174. E175 is an active-site residue. A Fe cation-binding site is contributed by H178.

This sequence belongs to the polypeptide deformylase family. It depends on Fe(2+) as a cofactor.

The catalysed reaction is N-terminal N-formyl-L-methionyl-[peptide] + H2O = N-terminal L-methionyl-[peptide] + formate. Functionally, removes the formyl group from the N-terminal Met of newly synthesized proteins. Requires at least a dipeptide for an efficient rate of reaction. N-terminal L-methionine is a prerequisite for activity but the enzyme has broad specificity at other positions. This Streptococcus thermophilus (strain CNRZ 1066) protein is Peptide deformylase.